A 664-amino-acid chain; its full sequence is Lysophospholipase 1 (664 aa).

Positions 1-22 (MKLQSLLVSAAVLTSLTENVNA) are cleaved as a signal peptide. N-linked (GlcNAc...) asparagine glycans are attached at residues N26, N33, N52, N78, N92, N123, N160, N170, N215, N277, N307, N345, N388, N459, N489, N513, N541, N565, and N582. Positions 35 to 586 (TCDDDINLVR…TNYCWNGTID (552 aa)) constitute a PLA2c domain. N634 carries the GPI-anchor amidated asparagine lipid modification. Residues 635-664 (AGNALVNYSNLNTNTFIGVLSVISAVFGLI) constitute a propeptide, removed in mature form.

It belongs to the lysophospholipase family.

The protein localises to the cell membrane. The enzyme catalyses a 1-acyl-sn-glycero-3-phosphocholine + H2O = sn-glycerol 3-phosphocholine + a fatty acid + H(+). It catalyses the reaction a 1-acyl-sn-glycero-3-phospho-(1D-myo-inositol) + H2O = sn-glycero-3-phospho-1D-myo-inositol + a fatty acid + H(+). It carries out the reaction a 1-acyl-sn-glycero-3-phospho-L-serine + H2O = sn-glycero-3-phospho-L-serine + a fatty acid + H(+). The catalysed reaction is a 1,2-diacyl-sn-glycero-3-phospho-(1D-myo-inositol) + 2 H2O = sn-glycero-3-phospho-1D-myo-inositol + 2 a carboxylate + 2 H(+). The enzyme catalyses a 1,2-diacyl-sn-glycero-3-phospho-L-serine + 2 H2O = sn-glycero-3-phospho-L-serine + 2 a carboxylate + 2 H(+). It catalyses the reaction 2 1-hexadecanoyl-sn-glycero-3-phosphocholine = 1,2-dihexadecanoyl-sn-glycero-3-phosphocholine + sn-glycerol 3-phosphocholine. It carries out the reaction 1-hexadecanoyl-sn-glycero-3-phosphocholine + H2O = sn-glycerol 3-phosphocholine + hexadecanoate + H(+). The catalysed reaction is 1,2-dihexadecanoyl-sn-glycero-3-phosphocholine + H2O = 1-hexadecanoyl-sn-glycero-3-phosphocholine + hexadecanoate + H(+). Functionally, sequentially removes both fatty acyl groups from diacylglycerophospholipids and therefore has both phospholipase B and lysophospholipase activities. It also displays transacylase activity. Substrate preference is phosphatidylserine &gt; phosphatidylinositol &gt;&gt; phosphatidylcholine &gt; phosphatidylethanolamine. The substrate specificity is pH- and ion-dependent. In contrast with activities observed at optimum pH 3.5, the order of substrate preference at pH 5.5 is phosphatidylcholine = phosphatidylethanolamine &gt;&gt; phosphatidylinositol. Degrades predominantly phosphatidylcholine and to some extent phosphatidylinositol in vivo. The chain is Lysophospholipase 1 from Saccharomyces cerevisiae (strain ATCC 204508 / S288c) (Baker's yeast).